A 337-amino-acid chain; its full sequence is DNA-directed RNA polymerase subunit alpha (337 aa).

An alpha N-terminal domain (alpha-NTD) region spans residues 1-233 (MVREDVVGST…DLLIPFLHAE (233 aa)). The tract at residues 265-337 (KGIPLTCIFI…FAINLLNKKL (73 aa)) is alpha C-terminal domain (alpha-CTD).

The protein belongs to the RNA polymerase alpha chain family. In terms of assembly, in plastids the minimal PEP RNA polymerase catalytic core is composed of four subunits: alpha, beta, beta', and beta''. When a (nuclear-encoded) sigma factor is associated with the core the holoenzyme is formed, which can initiate transcription.

It is found in the plastid. Its subcellular location is the chloroplast. It carries out the reaction RNA(n) + a ribonucleoside 5'-triphosphate = RNA(n+1) + diphosphate. DNA-dependent RNA polymerase catalyzes the transcription of DNA into RNA using the four ribonucleoside triphosphates as substrates. The chain is DNA-directed RNA polymerase subunit alpha from Phalaenopsis aphrodite subsp. formosana (Moth orchid).